Reading from the N-terminus, the 469-residue chain is Ubiquitin carboxyl-terminal hydrolase MINDY-1 (469 aa).

The interval 1–105 (MEHHQPEHPA…RLQELPQSPR (105 aa)) is disordered. Basic and acidic residues predominate over residues 23-44 (ENHKVLSEPKEHPQDKDAKEAD). Position 103 is a phosphoserine (serine 103). Cysteine 137 (nucleophile) is an active-site residue. Residue histidine 319 is the Proton acceptor of the active site. A ubiquitin-binding domain (UBD) region spans residues 388 to 428 (QVDQDYLIALSLQQQQPPPQGTSGLSDLELAQQLQQEEYQQ). The tract at residues 401–469 (QQQPPPQGTS…PKQESDCVLL (69 aa)) is disordered. A compositionally biased stretch (low complexity) spans 415–448 (LELAQQLQQEEYQQHQAAQAAPARAPSPQGRGAA). Serine 441 carries the post-translational modification Phosphoserine. The span at 453 to 469 (AAERRQRPKQESDCVLL) shows a compositional bias: basic and acidic residues.

It belongs to the MINDY deubiquitinase family. FAM63 subfamily.

It carries out the reaction Thiol-dependent hydrolysis of ester, thioester, amide, peptide and isopeptide bonds formed by the C-terminal Gly of ubiquitin (a 76-residue protein attached to proteins as an intracellular targeting signal).. Functionally, hydrolase that can specifically remove 'Lys-48'-linked conjugated ubiquitin from proteins. Has exodeubiquitinase activity and has a preference for long polyubiquitin chains. May play a regulatory role at the level of protein turnover. This is Ubiquitin carboxyl-terminal hydrolase MINDY-1 (MINDY1) from Bos taurus (Bovine).